The sequence spans 262 residues: Tryptophan synthase alpha chain (262 aa).

Residues Glu-49 and Asp-60 each act as proton acceptor in the active site.

It belongs to the TrpA family. As to quaternary structure, tetramer of two alpha and two beta chains.

The enzyme catalyses (1S,2R)-1-C-(indol-3-yl)glycerol 3-phosphate + L-serine = D-glyceraldehyde 3-phosphate + L-tryptophan + H2O. It functions in the pathway amino-acid biosynthesis; L-tryptophan biosynthesis; L-tryptophan from chorismate: step 5/5. Its function is as follows. The alpha subunit is responsible for the aldol cleavage of indoleglycerol phosphate to indole and glyceraldehyde 3-phosphate. This Thermoanaerobacter sp. (strain X514) protein is Tryptophan synthase alpha chain.